Consider the following 349-residue polypeptide: Single-stranded TG1-3 DNA-binding protein (349 aa).

The 83-residue stretch at Phe45–Pro127 folds into the RRM 1 domain. Disordered regions lie at residues Val121–Ile208 and Glu298–Ala349. Ser152 is subject to Phosphoserine. Residues Ala168 to Ala179 are compositionally biased toward polar residues. The span at Gly181–Gly191 shows a compositional bias: basic and acidic residues. An RRM 2 domain is found at Asn206–Phe296. Composition is skewed to basic and acidic residues over residues Glu298–Asn310 and Thr327–Ser340.

It localises to the cytoplasm. It is found in the nucleus. The protein localises to the chromosome. Its subcellular location is the telomere. Binds single-stranded telomeric sequences of the type (TG[1-3])n in vitro. Has a role in meiosis. In Schizosaccharomyces pombe (strain 972 / ATCC 24843) (Fission yeast), this protein is Single-stranded TG1-3 DNA-binding protein (tcg1).